Consider the following 82-residue polypeptide: ATP synthase subunit c (82 aa).

The next 2 helical transmembrane spans lie at 7 to 27 and 53 to 73; these read LVALACGIIIGLGAIGACIGI and FLLAGLIDAAFLIGVGIAMLF.

It belongs to the ATPase C chain family. F-type ATPases have 2 components, F(1) - the catalytic core - and F(0) - the membrane proton channel. F(1) has five subunits: alpha(3), beta(3), gamma(1), delta(1), epsilon(1). F(0) has three main subunits: a(1), b(2) and c(10-14). The alpha and beta chains form an alternating ring which encloses part of the gamma chain. F(1) is attached to F(0) by a central stalk formed by the gamma and epsilon chains, while a peripheral stalk is formed by the delta and b chains.

It localises to the cell inner membrane. Its function is as follows. F(1)F(0) ATP synthase produces ATP from ADP in the presence of a proton or sodium gradient. F-type ATPases consist of two structural domains, F(1) containing the extramembraneous catalytic core and F(0) containing the membrane proton channel, linked together by a central stalk and a peripheral stalk. During catalysis, ATP synthesis in the catalytic domain of F(1) is coupled via a rotary mechanism of the central stalk subunits to proton translocation. Functionally, key component of the F(0) channel; it plays a direct role in translocation across the membrane. A homomeric c-ring of between 10-14 subunits forms the central stalk rotor element with the F(1) delta and epsilon subunits. In Leptothrix cholodnii (strain ATCC 51168 / LMG 8142 / SP-6) (Leptothrix discophora (strain SP-6)), this protein is ATP synthase subunit c.